Consider the following 240-residue polypeptide: Uridylate kinase (240 aa).

13–16 (KASG) lines the ATP pocket. The interval 21-26 (GGQGFG) is involved in allosteric activation by GTP. A UMP-binding site is contributed by Gly-55. Residues Gly-56 and Arg-60 each contribute to the ATP site. UMP-binding positions include Asp-75 and 136–143 (TGNPFFTT). Thr-163, Gln-164, Tyr-169, and Asp-172 together coordinate ATP.

Belongs to the UMP kinase family. In terms of assembly, homohexamer.

It is found in the cytoplasm. The enzyme catalyses UMP + ATP = UDP + ADP. Its pathway is pyrimidine metabolism; CTP biosynthesis via de novo pathway; UDP from UMP (UMPK route): step 1/1. Its activity is regulated as follows. Allosterically activated by GTP. Inhibited by UTP. In terms of biological role, catalyzes the reversible phosphorylation of UMP to UDP. In Rhizobium johnstonii (strain DSM 114642 / LMG 32736 / 3841) (Rhizobium leguminosarum bv. viciae), this protein is Uridylate kinase.